We begin with the raw amino-acid sequence, 360 residues long: Putative F-box protein At3g16210 (360 aa).

Residues 1–48 form the F-box domain; sequence MSKFLPEELAIEILVRLSMKDLARFRCVCKTWRDLINDPGFTETYRDM.

This chain is Putative F-box protein At3g16210, found in Arabidopsis thaliana (Mouse-ear cress).